The primary structure comprises 292 residues: NAD kinase (292 aa).

Asp73 serves as the catalytic Proton acceptor. NAD(+) is bound by residues 73-74 (DG), 147-148 (NE), His158, Arg175, Asp177, 188-193 (TAYSLS), and Gln247.

Belongs to the NAD kinase family. A divalent metal cation is required as a cofactor.

The protein localises to the cytoplasm. It carries out the reaction NAD(+) + ATP = ADP + NADP(+) + H(+). Its function is as follows. Involved in the regulation of the intracellular balance of NAD and NADP, and is a key enzyme in the biosynthesis of NADP. Catalyzes specifically the phosphorylation on 2'-hydroxyl of the adenosine moiety of NAD to yield NADP. This chain is NAD kinase, found in Escherichia coli (strain SMS-3-5 / SECEC).